A 215-amino-acid chain; its full sequence is Adenylate kinase (215 aa).

Position 10–15 (10–15) interacts with ATP; the sequence is GAGKGT. Positions 30–59 are NMP; that stretch reads STGDMLRSAIKSGSELGKKAKQVMDAGQLV. Residues threonine 31, arginine 36, 57-59, 85-88, and glutamine 92 contribute to the AMP site; these read QLV and GFPR. The LID stretch occupies residues 122-159; the sequence is GRRVHPGSGRVYHVEHNPPKVEGKDDETGEDLVVRPDD. ATP contacts are provided by residues arginine 123 and 132 to 133; that span reads VY. A disordered region spans residues 128-151; it reads GSGRVYHVEHNPPKVEGKDDETGE. Positions 133–144 are enriched in basic and acidic residues; the sequence is YHVEHNPPKVEG. AMP contacts are provided by arginine 156 and arginine 167. Residues 195–215 form a disordered region; it reads KIDGTQPVERVSEQLGDLLRK. An ATP-binding site is contributed by glutamine 200.

The protein belongs to the adenylate kinase family. As to quaternary structure, monomer.

The protein resides in the cytoplasm. The enzyme catalyses AMP + ATP = 2 ADP. Its pathway is purine metabolism; AMP biosynthesis via salvage pathway; AMP from ADP: step 1/1. In terms of biological role, catalyzes the reversible transfer of the terminal phosphate group between ATP and AMP. Plays an important role in cellular energy homeostasis and in adenine nucleotide metabolism. The chain is Adenylate kinase from Idiomarina loihiensis (strain ATCC BAA-735 / DSM 15497 / L2-TR).